A 341-amino-acid chain; its full sequence is KRR1 small subunit processome component homolog (341 aa).

One can recognise a KH domain in the interval 126–194 (DIIKIGNLVH…VRDIVLETMN (69 aa)). Over residues 230-244 (KNKNISKRKQPKSRK) the composition is skewed to basic residues. Residues 230 to 327 (KNKNISKRKQ…RPSEASKVDV (98 aa)) are disordered. The stretch at 271–341 (FLNKEQKQAK…AKLLKANKQK (71 aa)) forms a coiled coil. Basic and acidic residues-rich tracts occupy residues 272-303 (LNKE…RNKD) and 313-327 (EQNR…KVDV).

The protein belongs to the KRR1 family. In terms of assembly, monomer. Component of the ribosomal small subunit (SSU) processome.

It localises to the nucleus. The protein resides in the nucleolus. Its function is as follows. Required for 40S ribosome biogenesis. Involved in nucleolar processing of pre-18S ribosomal RNA and ribosome assembly. Binds to RNA. Required for female germline development, cell viability during eye development and for survival of dividing cells and epithelial cells during early wing disk development. The protein is KRR1 small subunit processome component homolog of Drosophila grimshawi (Hawaiian fruit fly).